We begin with the raw amino-acid sequence, 341 residues long: Uroporphyrinogen decarboxylase (341 aa).

Residues Arg-25–Arg-29, Phe-44, Asp-74, Tyr-151, Ser-206, and His-318 each bind substrate.

It belongs to the uroporphyrinogen decarboxylase family. In terms of assembly, homodimer.

Its subcellular location is the cytoplasm. The enzyme catalyses uroporphyrinogen III + 4 H(+) = coproporphyrinogen III + 4 CO2. Its pathway is porphyrin-containing compound metabolism; protoporphyrin-IX biosynthesis; coproporphyrinogen-III from 5-aminolevulinate: step 4/4. Catalyzes the decarboxylation of four acetate groups of uroporphyrinogen-III to yield coproporphyrinogen-III. This is Uroporphyrinogen decarboxylase from Flavobacterium johnsoniae (strain ATCC 17061 / DSM 2064 / JCM 8514 / BCRC 14874 / CCUG 350202 / NBRC 14942 / NCIMB 11054 / UW101) (Cytophaga johnsonae).